A 112-amino-acid chain; its full sequence is Large ribosomal subunit protein eL31 (112 aa).

Belongs to the eukaryotic ribosomal protein eL31 family. In terms of assembly, component of the large ribosomal subunit. Mature ribosomes consist of a small (40S) and a large (60S) subunit. The 40S subunit contains about 32 different proteins and 1 molecule of RNA (18S). The 60S subunit contains 45 different proteins and 3 molecules of RNA (25S, 5.8S and 5S).

Its subcellular location is the cytoplasm. Functionally, component of the ribosome, a large ribonucleoprotein complex responsible for the synthesis of proteins in the cell. The small ribosomal subunit (SSU) binds messenger RNAs (mRNAs) and translates the encoded message by selecting cognate aminoacyl-transfer RNA (tRNA) molecules. The large subunit (LSU) contains the ribosomal catalytic site termed the peptidyl transferase center (PTC), which catalyzes the formation of peptide bonds, thereby polymerizing the amino acids delivered by tRNAs into a polypeptide chain. The nascent polypeptides leave the ribosome through a tunnel in the LSU and interact with protein factors that function in enzymatic processing, targeting, and the membrane insertion of nascent chains at the exit of the ribosomal tunnel. This chain is Large ribosomal subunit protein eL31, found in Candida albicans (strain SC5314 / ATCC MYA-2876) (Yeast).